The sequence spans 71 residues: Large ribosomal subunit protein bL28 (71 aa).

Belongs to the bacterial ribosomal protein bL28 family.

In Finegoldia magna (strain ATCC 29328 / DSM 20472 / WAL 2508) (Peptostreptococcus magnus), this protein is Large ribosomal subunit protein bL28.